The sequence spans 365 residues: Chorismate synthase (365 aa).

Arg48 and Arg54 together coordinate NADP(+). FMN is bound by residues 125–127, 237–238, Gly277, 292–296, and Arg318; these read RSS, NA, and KPTSS.

Belongs to the chorismate synthase family. As to quaternary structure, homotetramer. FMNH2 is required as a cofactor.

The catalysed reaction is 5-O-(1-carboxyvinyl)-3-phosphoshikimate = chorismate + phosphate. Its pathway is metabolic intermediate biosynthesis; chorismate biosynthesis; chorismate from D-erythrose 4-phosphate and phosphoenolpyruvate: step 7/7. Functionally, catalyzes the anti-1,4-elimination of the C-3 phosphate and the C-6 proR hydrogen from 5-enolpyruvylshikimate-3-phosphate (EPSP) to yield chorismate, which is the branch point compound that serves as the starting substrate for the three terminal pathways of aromatic amino acid biosynthesis. This reaction introduces a second double bond into the aromatic ring system. This Paracidovorax citrulli (strain AAC00-1) (Acidovorax citrulli) protein is Chorismate synthase.